Reading from the N-terminus, the 475-residue chain is Ribulose bisphosphate carboxylase large chain (475 aa).

Residues 1–2 (MS) constitute a propeptide that is removed on maturation. Pro-3 carries the N-acetylproline modification. Lys-14 is modified (N6,N6,N6-trimethyllysine). Positions 123 and 173 each coordinate substrate. Lys-175 (proton acceptor) is an active-site residue. Lys-177 lines the substrate pocket. Mg(2+)-binding residues include Lys-201, Asp-203, and Glu-204. Lys-201 carries the post-translational modification N6-carboxylysine. His-294 functions as the Proton acceptor in the catalytic mechanism. 3 residues coordinate substrate: Arg-295, His-327, and Ser-379.

This sequence belongs to the RuBisCO large chain family. Type I subfamily. Heterohexadecamer of 8 large chains and 8 small chains; disulfide-linked. The disulfide link is formed within the large subunit homodimers. It depends on Mg(2+) as a cofactor. In terms of processing, the disulfide bond which can form in the large chain dimeric partners within the hexadecamer appears to be associated with oxidative stress and protein turnover.

It localises to the plastid. The protein resides in the chloroplast. The catalysed reaction is 2 (2R)-3-phosphoglycerate + 2 H(+) = D-ribulose 1,5-bisphosphate + CO2 + H2O. It catalyses the reaction D-ribulose 1,5-bisphosphate + O2 = 2-phosphoglycolate + (2R)-3-phosphoglycerate + 2 H(+). In terms of biological role, ruBisCO catalyzes two reactions: the carboxylation of D-ribulose 1,5-bisphosphate, the primary event in carbon dioxide fixation, as well as the oxidative fragmentation of the pentose substrate in the photorespiration process. Both reactions occur simultaneously and in competition at the same active site. The protein is Ribulose bisphosphate carboxylase large chain of Adiantum capillus-veneris (Maidenhair fern).